The following is a 102-amino-acid chain: Large ribosomal subunit protein bL21 (102 aa).

This sequence belongs to the bacterial ribosomal protein bL21 family. In terms of assembly, part of the 50S ribosomal subunit. Contacts protein L20.

Functionally, this protein binds to 23S rRNA in the presence of protein L20. This is Large ribosomal subunit protein bL21 from Lawsonia intracellularis.